Reading from the N-terminus, the 168-residue chain is MVIMGRVAGPYAVAGWIKVFPYTEYVDGLLDYPDWWLGSEGGKWHKFKVIEGEVHGSVLLASLEQCADRDAAARLKGLKIAIPRRLLPALPESGEEGYYWSDLIGLAVINLQGEVLGKVAGLLETGANDVLQVQNPEETERLIPFIDQVIIKVDLAAGRITVDWGLDY.

Residues 95–168 (EEGYYWSDLI…RITVDWGLDY (74 aa)) form the PRC barrel domain.

The protein belongs to the RimM family. As to quaternary structure, binds ribosomal protein uS19.

Its subcellular location is the cytoplasm. Functionally, an accessory protein needed during the final step in the assembly of 30S ribosomal subunit, possibly for assembly of the head region. Essential for efficient processing of 16S rRNA. May be needed both before and after RbfA during the maturation of 16S rRNA. It has affinity for free ribosomal 30S subunits but not for 70S ribosomes. This is Ribosome maturation factor RimM from Nitrosospira multiformis (strain ATCC 25196 / NCIMB 11849 / C 71).